An 88-amino-acid chain; its full sequence is Small ribosomal subunit protein bS20 (88 aa).

The tract at residues 1–23 is disordered; the sequence is MANTSSAKKATRKIARRAAINKN.

It belongs to the bacterial ribosomal protein bS20 family.

Functionally, binds directly to 16S ribosomal RNA. In Mesorhizobium japonicum (strain LMG 29417 / CECT 9101 / MAFF 303099) (Mesorhizobium loti (strain MAFF 303099)), this protein is Small ribosomal subunit protein bS20.